Reading from the N-terminus, the 117-residue chain is UPF0102 protein Swoo_0351 (117 aa).

It belongs to the UPF0102 family.

In Shewanella woodyi (strain ATCC 51908 / MS32), this protein is UPF0102 protein Swoo_0351.